Here is a 312-residue protein sequence, read N- to C-terminus: Ribosomal protein L11 methyltransferase (312 aa).

Positions 162, 183, 205, and 248 each coordinate S-adenosyl-L-methionine.

The protein belongs to the methyltransferase superfamily. PrmA family.

The protein resides in the cytoplasm. The catalysed reaction is L-lysyl-[protein] + 3 S-adenosyl-L-methionine = N(6),N(6),N(6)-trimethyl-L-lysyl-[protein] + 3 S-adenosyl-L-homocysteine + 3 H(+). Methylates ribosomal protein L11. This Geobacillus kaustophilus (strain HTA426) protein is Ribosomal protein L11 methyltransferase.